We begin with the raw amino-acid sequence, 43 residues long: Protein PsbN (43 aa).

The helical transmembrane segment at 5–27 (TLVAISISGLLVSFTGYALYTAF) threads the bilayer.

It belongs to the PsbN family.

It is found in the plastid. The protein localises to the chloroplast thylakoid membrane. Its function is as follows. May play a role in photosystem I and II biogenesis. This is Protein PsbN from Eucalyptus globulus subsp. globulus (Tasmanian blue gum).